The following is a 156-amino-acid chain: Small ribosomal subunit protein uS7 (156 aa).

It belongs to the universal ribosomal protein uS7 family. Part of the 30S ribosomal subunit. Contacts proteins S9 and S11.

In terms of biological role, one of the primary rRNA binding proteins, it binds directly to 16S rRNA where it nucleates assembly of the head domain of the 30S subunit. Is located at the subunit interface close to the decoding center, probably blocks exit of the E-site tRNA. This Kineococcus radiotolerans (strain ATCC BAA-149 / DSM 14245 / SRS30216) protein is Small ribosomal subunit protein uS7.